The chain runs to 97 residues: Large ribosomal subunit protein eL21 (97 aa).

A disordered region spans residues 1–23 (MTKMSKGPRSGSRRVMTKSVKNK).

Belongs to the eukaryotic ribosomal protein eL21 family.

The protein is Large ribosomal subunit protein eL21 of Picrophilus torridus (strain ATCC 700027 / DSM 9790 / JCM 10055 / NBRC 100828 / KAW 2/3).